Consider the following 445-residue polypeptide: Methylenetetrahydrofolate--tRNA-(uracil-5-)-methyltransferase TrmFO (445 aa).

An FAD-binding site is contributed by 10-15; that stretch reads GGGLSG.

This sequence belongs to the MnmG family. TrmFO subfamily. FAD serves as cofactor.

Its subcellular location is the cytoplasm. It carries out the reaction uridine(54) in tRNA + (6R)-5,10-methylene-5,6,7,8-tetrahydrofolate + NADH + H(+) = 5-methyluridine(54) in tRNA + (6S)-5,6,7,8-tetrahydrofolate + NAD(+). It catalyses the reaction uridine(54) in tRNA + (6R)-5,10-methylene-5,6,7,8-tetrahydrofolate + NADPH + H(+) = 5-methyluridine(54) in tRNA + (6S)-5,6,7,8-tetrahydrofolate + NADP(+). Catalyzes the folate-dependent formation of 5-methyl-uridine at position 54 (M-5-U54) in all tRNAs. This Lawsonia intracellularis (strain PHE/MN1-00) protein is Methylenetetrahydrofolate--tRNA-(uracil-5-)-methyltransferase TrmFO.